A 312-amino-acid chain; its full sequence is Acetyl-coenzyme A carboxylase carboxyl transferase subunit alpha (312 aa).

The 251-residue stretch at 36-286 (NLEKEISKTY…ADYVKKSLNE (251 aa)) folds into the CoA carboxyltransferase C-terminal domain.

Belongs to the AccA family. Acetyl-CoA carboxylase is a heterohexamer composed of biotin carboxyl carrier protein (AccB), biotin carboxylase (AccC) and two subunits each of ACCase subunit alpha (AccA) and ACCase subunit beta (AccD).

It is found in the cytoplasm. It carries out the reaction N(6)-carboxybiotinyl-L-lysyl-[protein] + acetyl-CoA = N(6)-biotinyl-L-lysyl-[protein] + malonyl-CoA. It functions in the pathway lipid metabolism; malonyl-CoA biosynthesis; malonyl-CoA from acetyl-CoA: step 1/1. In terms of biological role, component of the acetyl coenzyme A carboxylase (ACC) complex. First, biotin carboxylase catalyzes the carboxylation of biotin on its carrier protein (BCCP) and then the CO(2) group is transferred by the carboxyltransferase to acetyl-CoA to form malonyl-CoA. The polypeptide is Acetyl-coenzyme A carboxylase carboxyl transferase subunit alpha (Campylobacter jejuni subsp. jejuni serotype O:6 (strain 81116 / NCTC 11828)).